Here is a 269-residue protein sequence, read N- to C-terminus: Formamidopyrimidine-DNA glycosylase (269 aa).

The active-site Schiff-base intermediate with DNA is the proline 2. Catalysis depends on glutamate 3, which acts as the Proton donor. Lysine 57 (proton donor; for beta-elimination activity) is an active-site residue. Residues histidine 90, arginine 109, and lysine 150 each contribute to the DNA site. The FPG-type zinc-finger motif lies at 235-269; it reads QVYGKGGLPCPKCGTELAEVKIGQRATVYCSQCQQ. Residue arginine 259 is the Proton donor; for delta-elimination activity of the active site.

Belongs to the FPG family. As to quaternary structure, monomer. Zn(2+) is required as a cofactor.

The catalysed reaction is Hydrolysis of DNA containing ring-opened 7-methylguanine residues, releasing 2,6-diamino-4-hydroxy-5-(N-methyl)formamidopyrimidine.. It catalyses the reaction 2'-deoxyribonucleotide-(2'-deoxyribose 5'-phosphate)-2'-deoxyribonucleotide-DNA = a 3'-end 2'-deoxyribonucleotide-(2,3-dehydro-2,3-deoxyribose 5'-phosphate)-DNA + a 5'-end 5'-phospho-2'-deoxyribonucleoside-DNA + H(+). Its function is as follows. Involved in base excision repair of DNA damaged by oxidation or by mutagenic agents. Acts as a DNA glycosylase that recognizes and removes damaged bases. Has a preference for oxidized purines, such as 7,8-dihydro-8-oxoguanine (8-oxoG). Has AP (apurinic/apyrimidinic) lyase activity and introduces nicks in the DNA strand. Cleaves the DNA backbone by beta-delta elimination to generate a single-strand break at the site of the removed base with both 3'- and 5'-phosphates. This is Formamidopyrimidine-DNA glycosylase from Photobacterium damsela subsp. piscicida (Pasteurella piscicida).